The following is a 488-amino-acid chain: DNA polymerase II small subunit (488 aa).

This sequence belongs to the DNA polymerase delta/II small subunit family. Heterodimer of a large subunit and a small subunit.

The catalysed reaction is DNA(n) + a 2'-deoxyribonucleoside 5'-triphosphate = DNA(n+1) + diphosphate. It carries out the reaction Exonucleolytic cleavage in the 3'- to 5'-direction to yield nucleoside 5'-phosphates.. Possesses two activities: a DNA synthesis (polymerase) and an exonucleolytic activity that degrades single-stranded DNA in the 3' to 5' direction. Has a template-primer preference which is characteristic of a replicative DNA polymerase. The polypeptide is DNA polymerase II small subunit (polB) (Thermoplasma acidophilum (strain ATCC 25905 / DSM 1728 / JCM 9062 / NBRC 15155 / AMRC-C165)).